The chain runs to 546 residues: Carboxypeptidase Y homolog A (546 aa).

The N-terminal stretch at 1–17 (MKLLASTVLVGAAAASI) is a signal peptide. Positions 18–132 (TPQQQVLQNP…KLEQYNLRAK (115 aa)) are excised as a propeptide. 5 disulfide bridges follow: Cys186–Cys426, Cys320–Cys334, Cys344–Cys367, Cys351–Cys360, and Cys389–Cys396. N-linked (GlcNAc...) asparagine glycosylation occurs at Asn217. The active site involves Ser273. The active site involves Asp465. A glycan (N-linked (GlcNAc...) asparagine) is linked at Asn512. Residue His523 is part of the active site.

This sequence belongs to the peptidase S10 family.

It is found in the vacuole. The enzyme catalyses Release of a C-terminal amino acid with broad specificity.. In terms of biological role, vacuolar carboxypeptidase involved in degradation of small peptides. Digests preferentially peptides containing an aliphatic or hydrophobic residue in P1' position, as well as methionine, leucine or phenylalanine in P1 position of ester substrate. This chain is Carboxypeptidase Y homolog A (CPYA), found in Botryotinia fuckeliana (strain B05.10) (Noble rot fungus).